A 240-amino-acid polypeptide reads, in one-letter code: MKRSKNLRAADAKVDRERNYAPLEAVRLAKETSSTKFDGTVEVAFALGVDPRKADQMVRGTVNLPHGTGKTARVLVFATGDRAAAAEAAGADIVGADELIDEVAKGRLDFDAVVATPDLMGKVGRLGRVLGPRGLMPNPKTGTVTPDVVKAVNDIKGGKIEFRVDKHSNLHFIIGKVSFDETKLVENYAAALEEILRLKPSAAKGRYIKKATLATTMGPGIPLDANRTRNLLVEEDPASV.

Belongs to the universal ribosomal protein uL1 family. As to quaternary structure, part of the 50S ribosomal subunit.

Its function is as follows. Binds directly to 23S rRNA. The L1 stalk is quite mobile in the ribosome, and is involved in E site tRNA release. Functionally, protein L1 is also a translational repressor protein, it controls the translation of the L11 operon by binding to its mRNA. The protein is Large ribosomal subunit protein uL1 of Streptomyces griseus subsp. griseus (strain JCM 4626 / CBS 651.72 / NBRC 13350 / KCC S-0626 / ISP 5235).